We begin with the raw amino-acid sequence, 1221 residues long: Phosphoenolpyruvate carboxylase 2 (1221 aa).

Histidine 156 is a catalytic residue. 2 disordered regions span residues 443 to 588 (TAAE…DPTF) and 642 to 661 (REPAGEAHGGVGAGGGGGGG). Low complexity-rich tracts occupy residues 503-513 (TTTATAAAAAA) and 550-564 (PFREAANAAMSTAAS). Composition is skewed to gly residues over residues 565–575 (GGAGGGGGGGA) and 648–661 (AHGGVGAGGGGGGG). Residue lysine 886 is part of the active site.

Belongs to the PEPCase type 1 family. The cofactor is Mg(2+).

The protein localises to the cytoplasm. The enzyme catalyses oxaloacetate + phosphate = phosphoenolpyruvate + hydrogencarbonate. Through the carboxylation of phosphoenolpyruvate (PEP) it forms oxaloacetate, a four-carbon dicarboxylic acid source for the tricarboxylic acid cycle. This chain is Phosphoenolpyruvate carboxylase 2, found in Chlamydomonas reinhardtii (Chlamydomonas smithii).